A 213-amino-acid polypeptide reads, in one-letter code: von Hippel-Lindau disease tumor suppressor (213 aa).

The tract at residues 1–65 (MPRRAENWDE…AGRPRPVLRS (65 aa)) is disordered. The span at 8 to 54 (WDEAEVGAEEAGVEEYGPEEDGGEESGAEESGPEESGPEELGAEEEM) shows a compositional bias: acidic residues. 8 repeat units span residues 14 to 18 (GAEEA), 19 to 23 (GVEEY), 24 to 28 (GPEED), 29 to 33 (GGEES), 34 to 38 (GAEES), 39 to 43 (GPEES), 44 to 48 (GPEEL), and 49 to 53 (GAEEE). The segment at 14-53 (GAEEAGVEEYGPEEDGGEESGAEESGPEESGPEELGAEEE) is 8 X 5 AA tandem repeats of G-[PAVG]-E-E-[DAYSLE]. The interval 100–155 (TLPPGTGRRIHSYRGHLWLFRDAGTHDGLLVNQTELFVPSLNVDGQPIFANITLPV) is involved in binding to CCT complex. Positions 157–166 (TLKERCLQVV) are interaction with Elongin BC complex.

This sequence belongs to the VHL family. Component of the VCB (VHL-Elongin BC-CUL2) complex; this complex acts as a ubiquitin-ligase E3 and directs proteasome-dependent degradation of targeted proteins. Interacts with CUL2; this interaction is dependent on the integrity of the trimeric VCB complex. Interacts (via the beta domain) with HIF1A (via the NTAD domain); this interaction mediates degradation of HIF1A in normoxia and, in hypoxia, prevents ubiquitination and degradation of HIF1A by mediating hypoxia-induced translocation to the nucleus, a process which requires a hypoxia-dependent regulatory signal. Interacts with ADRB2; the interaction, in normoxia, is dependent on hydroxylation of ADRB2 and the subsequent VCB-mediated ubiquitination and degradation of ADRB2. Under hypoxia, hydroxylation, interaction with VHL, ubiquitination and subsequent degradation of ADRB2 are dramatically decreased. Interacts with RNF139, USP33 and JADE1. Found in a complex composed of LIMD1, VHL, EGLN1/PHD2, ELOB and CUL2. Isoform 1 and isoform 3 interact with LIMD1 (via LIM zinc-binding 2), AJUBA (via LIM domains) and WTIP (via LIM domains). Interacts with EPAS1. Interacts with CARD9. Interacts with DCUN1D1 independently of CUL2; this interaction engages DCUN1D1 in the VCB complex and triggers CUL2 neddylation and consequently cullin ring ligase (CRL) substrates polyubiquitylation. Interacts with ALAS1 (hydroxylated form). Interacts with IGFBP1. In terms of tissue distribution, expressed in the adult and fetal brain and kidney.

It localises to the cytoplasm. The protein localises to the cell membrane. It is found in the endoplasmic reticulum. Its subcellular location is the nucleus. The protein operates within protein modification; protein ubiquitination. Involved in the ubiquitination and subsequent proteasomal degradation via the von Hippel-Lindau ubiquitination complex. Seems to act as a target recruitment subunit in the E3 ubiquitin ligase complex and recruits hydroxylated hypoxia-inducible factor (HIF) under normoxic conditions. Involved in transcriptional repression through interaction with HIF1A, HIF1AN and histone deacetylases. Ubiquitinates, in an oxygen-responsive manner, ADRB2. Acts as a negative regulator of mTORC1 by promoting ubiquitination and degradation of RPTOR. The protein is von Hippel-Lindau disease tumor suppressor (VHL) of Homo sapiens (Human).